We begin with the raw amino-acid sequence, 711 residues long: Polyribonucleotide nucleotidyltransferase (711 aa).

Residues Asp-489 and Asp-495 each contribute to the Mg(2+) site. The KH domain maps to 556 to 615; sequence PRIHTIKISPDKIKDVIGKGGSVIRALTEETGTTIEIEDDGTVKIAATDGEKAKHAIRRI. An S1 motif domain is found at 625 to 693; the sequence is GRIYNGKVTR…RQGRVRLSIK (69 aa).

Belongs to the polyribonucleotide nucleotidyltransferase family. As to quaternary structure, component of the RNA degradosome, which is a multiprotein complex involved in RNA processing and mRNA degradation. Mg(2+) is required as a cofactor.

Its subcellular location is the cytoplasm. It carries out the reaction RNA(n+1) + phosphate = RNA(n) + a ribonucleoside 5'-diphosphate. Its function is as follows. Involved in mRNA degradation. Catalyzes the phosphorolysis of single-stranded polyribonucleotides processively in the 3'- to 5'-direction. This Cronobacter sakazakii (strain ATCC BAA-894) (Enterobacter sakazakii) protein is Polyribonucleotide nucleotidyltransferase.